The chain runs to 428 residues: Serine--tRNA ligase (428 aa).

An L-serine-binding site is contributed by Thr235–Glu237. Arg266 to Glu268 contributes to the ATP binding site. Glu289 provides a ligand contact to L-serine. Glu353 to Ser356 provides a ligand contact to ATP. Ser389 serves as a coordination point for L-serine.

This sequence belongs to the class-II aminoacyl-tRNA synthetase family. Type-1 seryl-tRNA synthetase subfamily. Homodimer. The tRNA molecule binds across the dimer.

It is found in the cytoplasm. It carries out the reaction tRNA(Ser) + L-serine + ATP = L-seryl-tRNA(Ser) + AMP + diphosphate + H(+). The catalysed reaction is tRNA(Sec) + L-serine + ATP = L-seryl-tRNA(Sec) + AMP + diphosphate + H(+). It participates in aminoacyl-tRNA biosynthesis; selenocysteinyl-tRNA(Sec) biosynthesis; L-seryl-tRNA(Sec) from L-serine and tRNA(Sec): step 1/1. Its function is as follows. Catalyzes the attachment of serine to tRNA(Ser). Is also able to aminoacylate tRNA(Sec) with serine, to form the misacylated tRNA L-seryl-tRNA(Sec), which will be further converted into selenocysteinyl-tRNA(Sec). The chain is Serine--tRNA ligase from Shewanella halifaxensis (strain HAW-EB4).